Reading from the N-terminus, the 554-residue chain is Thermosome subunit beta (554 aa).

The tract at residues 532 to 554 (GKKSGSEPSGKKEKDKEEKSSED) is disordered. Over residues 540-554 (SGKKEKDKEEKSSED) the composition is skewed to basic and acidic residues.

This sequence belongs to the TCP-1 chaperonin family. As to quaternary structure, forms a Heterooligomeric complex of two stacked eight-membered rings.

Functionally, molecular chaperone; binds unfolded polypeptides in vitro, and has a weak ATPase activity. The polypeptide is Thermosome subunit beta (thsB) (Saccharolobus solfataricus (strain ATCC 35092 / DSM 1617 / JCM 11322 / P2) (Sulfolobus solfataricus)).